The primary structure comprises 210 residues: Large ribosomal subunit protein uL4 (210 aa).

A disordered region spans residues 56–80; sequence FVSGGGKKPWRQKGTGRARAGSTRS.

This sequence belongs to the universal ribosomal protein uL4 family. Part of the 50S ribosomal subunit.

Functionally, one of the primary rRNA binding proteins, this protein initially binds near the 5'-end of the 23S rRNA. It is important during the early stages of 50S assembly. It makes multiple contacts with different domains of the 23S rRNA in the assembled 50S subunit and ribosome. In terms of biological role, forms part of the polypeptide exit tunnel. In Solidesulfovibrio magneticus (strain ATCC 700980 / DSM 13731 / RS-1) (Desulfovibrio magneticus), this protein is Large ribosomal subunit protein uL4.